Reading from the N-terminus, the 119-residue chain is Large ribosomal subunit protein uL24 (119 aa).

Belongs to the universal ribosomal protein uL24 family. As to quaternary structure, part of the 50S ribosomal subunit.

In terms of biological role, one of two assembly initiator proteins, it binds directly to the 5'-end of the 23S rRNA, where it nucleates assembly of the 50S subunit. Functionally, one of the proteins that surrounds the polypeptide exit tunnel on the outside of the subunit. This is Large ribosomal subunit protein uL24 from Arthrobacter sp. (strain FB24).